The primary structure comprises 405 residues: Formate-dependent phosphoribosylglycinamide formyltransferase (405 aa).

Residues 22 to 23 and E82 each bind N(1)-(5-phospho-beta-D-ribosyl)glycinamide; that span reads EL. ATP is bound by residues R115, K162, 167-172, 202-205, and E210; these read SSGKGQ and EGFI. The ATP-grasp domain occupies 120–320; it reads RLAAETLGLP…EFELHARAIL (201 aa). Positions 279 and 291 each coordinate Mg(2+). Residues D298, K367, and 374 to 375 contribute to the N(1)-(5-phospho-beta-D-ribosyl)glycinamide site; that span reads RR.

It belongs to the PurK/PurT family. Homodimer.

The enzyme catalyses N(1)-(5-phospho-beta-D-ribosyl)glycinamide + formate + ATP = N(2)-formyl-N(1)-(5-phospho-beta-D-ribosyl)glycinamide + ADP + phosphate + H(+). The protein operates within purine metabolism; IMP biosynthesis via de novo pathway; N(2)-formyl-N(1)-(5-phospho-D-ribosyl)glycinamide from N(1)-(5-phospho-D-ribosyl)glycinamide (formate route): step 1/1. In terms of biological role, involved in the de novo purine biosynthesis. Catalyzes the transfer of formate to 5-phospho-ribosyl-glycinamide (GAR), producing 5-phospho-ribosyl-N-formylglycinamide (FGAR). Formate is provided by PurU via hydrolysis of 10-formyl-tetrahydrofolate. The chain is Formate-dependent phosphoribosylglycinamide formyltransferase from Leptothrix cholodnii (strain ATCC 51168 / LMG 8142 / SP-6) (Leptothrix discophora (strain SP-6)).